The primary structure comprises 341 residues: Ribosomal RNA small subunit methyltransferase C (341 aa).

Belongs to the methyltransferase superfamily. RsmC family. As to quaternary structure, monomer.

It is found in the cytoplasm. The enzyme catalyses guanosine(1207) in 16S rRNA + S-adenosyl-L-methionine = N(2)-methylguanosine(1207) in 16S rRNA + S-adenosyl-L-homocysteine + H(+). Functionally, specifically methylates the guanine in position 1207 of 16S rRNA in the 30S particle. In Vibrio parahaemolyticus serotype O3:K6 (strain RIMD 2210633), this protein is Ribosomal RNA small subunit methyltransferase C.